We begin with the raw amino-acid sequence, 506 residues long: BTB/POZ domain-containing protein 16 (506 aa).

The 57-residue stretch at Ile150–Leu206 folds into the BTB domain.

The polypeptide is BTB/POZ domain-containing protein 16 (Btbd16) (Rattus norvegicus (Rat)).